The sequence spans 203 residues: Holliday junction branch migration complex subunit RuvA (203 aa).

The domain I stretch occupies residues 1–63 (MIGKLSGKID…EEHIHLYGFL (63 aa)). Residues 64 to 142 (TIEEKNFFNL…KISTGAAIIN (79 aa)) are domain II. Positions 143-149 (DSLNIKN) are flexible linker. The tract at residues 150–203 (ITSVASNEVIKALVNLGFSRFEAQNSVQGIVIQNPEISIDELIKTALKNRNAGL) is domain III.

Belongs to the RuvA family. Homotetramer. Forms an RuvA(8)-RuvB(12)-Holliday junction (HJ) complex. HJ DNA is sandwiched between 2 RuvA tetramers; dsDNA enters through RuvA and exits via RuvB. An RuvB hexamer assembles on each DNA strand where it exits the tetramer. Each RuvB hexamer is contacted by two RuvA subunits (via domain III) on 2 adjacent RuvB subunits; this complex drives branch migration. In the full resolvosome a probable DNA-RuvA(4)-RuvB(12)-RuvC(2) complex forms which resolves the HJ.

The protein resides in the cytoplasm. In terms of biological role, the RuvA-RuvB-RuvC complex processes Holliday junction (HJ) DNA during genetic recombination and DNA repair, while the RuvA-RuvB complex plays an important role in the rescue of blocked DNA replication forks via replication fork reversal (RFR). RuvA specifically binds to HJ cruciform DNA, conferring on it an open structure. The RuvB hexamer acts as an ATP-dependent pump, pulling dsDNA into and through the RuvAB complex. HJ branch migration allows RuvC to scan DNA until it finds its consensus sequence, where it cleaves and resolves the cruciform DNA. The protein is Holliday junction branch migration complex subunit RuvA of Rickettsia akari (strain Hartford).